The following is a 212-amino-acid chain: Acyl-homoserine-lactone synthase (212 aa).

This sequence belongs to the autoinducer synthase family.

The catalysed reaction is a fatty acyl-[ACP] + S-adenosyl-L-methionine = an N-acyl-L-homoserine lactone + S-methyl-5'-thioadenosine + holo-[ACP] + H(+). Required for the synthesis of OHHL (N-(3-oxohexanoyl)-L-homoserine lactone), an autoinducer molecule which binds to TraR and thus acts in the control of conjugal transfer. The sequence is that of Acyl-homoserine-lactone synthase (traI) from Rhizobium radiobacter (Agrobacterium tumefaciens).